The sequence spans 173 residues: Adenine phosphoribosyltransferase (173 aa).

The protein belongs to the purine/pyrimidine phosphoribosyltransferase family. As to quaternary structure, homodimer.

It localises to the cytoplasm. It carries out the reaction AMP + diphosphate = 5-phospho-alpha-D-ribose 1-diphosphate + adenine. The protein operates within purine metabolism; AMP biosynthesis via salvage pathway; AMP from adenine: step 1/1. Catalyzes a salvage reaction resulting in the formation of AMP, that is energically less costly than de novo synthesis. The chain is Adenine phosphoribosyltransferase from Desulfitobacterium hafniense (strain Y51).